Here is a 109-residue protein sequence, read N- to C-terminus: Cytochrome bo(3) ubiquinol oxidase subunit 4 (109 aa).

Topologically, residues Met-1–Thr-17 are cytoplasmic. The chain crosses the membrane as a helical span at residues Tyr-18–Val-36. Over Met-37–Val-45 the chain is Periplasmic. A helical transmembrane segment spans residues Ile-46–Cys-64. The Cytoplasmic portion of the chain corresponds to Phe-65–Ala-80. The chain crosses the membrane as a helical span at residues Phe-81–Met-99. Residues Trp-100–His-109 are Periplasmic-facing.

It belongs to the cytochrome c oxidase bacterial subunit 4 family. Heterooctamer of two A chains, two B chains, two C chains and two D chains.

Its subcellular location is the cell inner membrane. Cytochrome bo(3) ubiquinol terminal oxidase is the component of the aerobic respiratory chain of E.coli that predominates when cells are grown at high aeration. Has proton pump activity across the membrane in addition to electron transfer, pumping 2 protons/electron. This chain is Cytochrome bo(3) ubiquinol oxidase subunit 4 (cyoD), found in Escherichia coli O157:H7.